We begin with the raw amino-acid sequence, 1391 residues long: DNA-directed RNA polymerase subunit beta'' (1391 aa).

Zn(2+) is bound by residues Cys-224, Cys-295, Cys-302, and Cys-305.

Belongs to the RNA polymerase beta' chain family. RpoC2 subfamily. In plastids the minimal PEP RNA polymerase catalytic core is composed of four subunits: alpha, beta, beta', and beta''. When a (nuclear-encoded) sigma factor is associated with the core the holoenzyme is formed, which can initiate transcription. Zn(2+) is required as a cofactor.

It is found in the plastid. The protein resides in the chloroplast. It carries out the reaction RNA(n) + a ribonucleoside 5'-triphosphate = RNA(n+1) + diphosphate. In terms of biological role, DNA-dependent RNA polymerase catalyzes the transcription of DNA into RNA using the four ribonucleoside triphosphates as substrates. The polypeptide is DNA-directed RNA polymerase subunit beta'' (Buxus microphylla (Littleleaf boxwood)).